We begin with the raw amino-acid sequence, 195 residues long: Small ribosomal subunit protein uS4 (195 aa).

The S4 RNA-binding domain maps to 88–150 (RRLENVVYRL…SKNVELIKLA (63 aa)).

Belongs to the universal ribosomal protein uS4 family. In terms of assembly, part of the 30S ribosomal subunit. Contacts protein S5. The interaction surface between S4 and S5 is involved in control of translational fidelity.

Functionally, one of the primary rRNA binding proteins, it binds directly to 16S rRNA where it nucleates assembly of the body of the 30S subunit. In terms of biological role, with S5 and S12 plays an important role in translational accuracy. The protein is Small ribosomal subunit protein uS4 of Fusobacterium nucleatum subsp. nucleatum (strain ATCC 25586 / DSM 15643 / BCRC 10681 / CIP 101130 / JCM 8532 / KCTC 2640 / LMG 13131 / VPI 4355).